Consider the following 380-residue polypeptide: Succinyl-diaminopimelate desuccinylase (380 aa).

His-69 serves as a coordination point for Zn(2+). The active site involves Asp-71. Asp-102 is a binding site for Zn(2+). Glu-135 serves as the catalytic Proton acceptor. The Zn(2+) site is built by Glu-136, Glu-164, and His-353.

Belongs to the peptidase M20A family. DapE subfamily. Homodimer. The cofactor is Zn(2+). Co(2+) serves as cofactor.

It catalyses the reaction N-succinyl-(2S,6S)-2,6-diaminopimelate + H2O = (2S,6S)-2,6-diaminopimelate + succinate. Its pathway is amino-acid biosynthesis; L-lysine biosynthesis via DAP pathway; LL-2,6-diaminopimelate from (S)-tetrahydrodipicolinate (succinylase route): step 3/3. Catalyzes the hydrolysis of N-succinyl-L,L-diaminopimelic acid (SDAP), forming succinate and LL-2,6-diaminopimelate (DAP), an intermediate involved in the bacterial biosynthesis of lysine and meso-diaminopimelic acid, an essential component of bacterial cell walls. This is Succinyl-diaminopimelate desuccinylase from Cereibacter sphaeroides (strain ATCC 17023 / DSM 158 / JCM 6121 / CCUG 31486 / LMG 2827 / NBRC 12203 / NCIMB 8253 / ATH 2.4.1.) (Rhodobacter sphaeroides).